A 1157-amino-acid chain; its full sequence is Endo-1,4-beta-xylanase A (1157 aa).

Positions 1–33 are cleaved as a signal peptide; the sequence is MMKNNVDRIVSIVTALIMIFGASLFSPPIRVFA. CBM-cenC domains lie at 38-189 and 195-343; these read INLV…VTTQ and GNVI…VIGE. The region spanning 352 to 675 is the GH10 domain; the sequence is QNDIPDLYSV…KPAFWAVVDP (324 aa). Catalysis depends on Glu-495, which acts as the Proton donor. Asp-537 is a catalytic residue. Glu-600 (nucleophile) is an active-site residue. SLH domains lie at 1051-1114 and 1115-1157; these read KKGV…YSGE and FSDV…EMTQ.

Belongs to the glycosyl hydrolase 10 (cellulase F) family.

The catalysed reaction is Endohydrolysis of (1-&gt;4)-beta-D-xylosidic linkages in xylans.. It functions in the pathway glycan degradation; xylan degradation. Its function is as follows. Endo-acting enzyme that randomly cleaves the internal xylosidic linkages of the xylan backbone, yielding xylooligosaccharides of various lengths which are further hydrolyzed to xylose molecules by beta-xylosidase (EC 3.2.1.37). Requires at least three xylose residues for catalytic activity. Does not have activity against xylobiose. The polypeptide is Endo-1,4-beta-xylanase A (xynA) (Thermoanaerobacterium saccharolyticum).